Here is a 236-residue protein sequence, read N- to C-terminus: MSQLPAVSSAPQTGAASRDRRLPQAEVGGGRRALPGPARPGETRGRPMAAAREGPAAPAAAARGGRVAAAREGRAAAARGGPGAAPRGGAAAREGPAAAAASREARMAEVARLLGDPLEEEAPEGRPRSRAGGLAAMPYMRFRHPLSVLGINYQQFLRHYLENYPIAPGRIQELEERRRRFVEACRAREAAFDIEYLRNPQRVDFDILTFTIALTASEVINPLIEELGCDKFIHRE.

A compositionally biased stretch (polar residues) spans 1-15 (MSQLPAVSSAPQTGA). The segment at 1–102 (MSQLPAVSSA…REGPAAAAAS (102 aa)) is disordered. 2 stretches are compositionally biased toward low complexity: residues 32–68 (RALPGPARPGETRGRPMAAAREGPAAPAAAARGGRVA) and 75–102 (AAAARGGPGAAPRGGAAAREGPAAAAAS). Residues Arg63 and Arg79 each carry the omega-N-methylarginine modification. The stretch at 170–190 (RIQELEERRRRFVEACRAREA) forms a coiled coil.

In terms of assembly, heterodimer with EID2B. Interacts with the C-terminus of EP300. Interacts with HDAC1 and HDAC2. Interacts with SMAD2, SMAD4 and with the MH2 domain of SMAD3. As to expression, expressed in heart, brain, kidney and pancreas. Not detected in placenta.

It is found in the nucleus. Its function is as follows. Interacts with EP300 and acts as a repressor of MYOD-dependent transcription and muscle differentiation. Inhibits EP300 histone acetyltransferase activity. Acts as a repressor of TGFB/SMAD transcriptional responses. May act as a repressor of the TGFB/SMAD3-dependent signaling by selectively blocking formation of TGFB-induced SMAD3-SMAD4 complex. The sequence is that of EP300-interacting inhibitor of differentiation 2 from Mus musculus (Mouse).